The following is a 413-amino-acid chain: MAVVCSKADWFVTSCSTTLVAVNLKQSREPFVFDCSKAEKKPKEADVDNKSAGEGSEEKDSDSILAFAISASGKHVALTDDHKRLVLFCTEPSWKCISTRWVVRRCTSLAFTQAEDELYVADKSGDVYSFSILEPHKAGELKLGHLSMLLDVALSPDDKYIITADRDEKIRVSFRRSPYNIQAFCLGHTEFVSSLLVPAGHPDWLLSGSGDGTVNVWHYETGRRLHSVDMRKFGLDSENTEKRFAVSRIISSPDGQHVAVQCEGFPSVQLFTVDCGTEGLLKPADTLTLPLSPWDVTFDSENQLWVLLESEDMKVLLYRHSEQHWRLCDSESPELKKVTNALQTQWHLFKGSVGLESQFKHLYKVNFDNMASYLQKKQERLDLEHKKRAAAANGSKPNKKSKTESGAVPQSTS.

WD repeat units lie at residues tryptophan 101–glutamate 140, glycine 144–alanine 183, glycine 187–serine 227, and threonine 286–cysteine 328. The interval lysine 386–serine 413 is disordered.

It belongs to the WD repeat TRM82 family. As to quaternary structure, non-catalytic component of the METTL1-WDR4 complex, composed of mettl1 and wdr4.

It is found in the nucleus. It functions in the pathway tRNA modification; N(7)-methylguanine-tRNA biosynthesis. Functionally, non-catalytic component of the METTL1-WDR4 methyltransferase complex required for the formation of N(7)-methylguanine in a subset of RNA species, such as tRNAs, mRNAs and microRNAs (miRNAs). In the METTL1-WDR4 methyltransferase complex, wdr4 acts as a scaffold for tRNA-binding. Required for the formation of N(7)-methylguanine at position 46 (m7G46) in a large subset of tRNAs that contain the 5'-RAGGU-3' motif within the variable loop. M7G46 interacts with C13-G22 in the D-loop to stabilize tRNA tertiary structure and protect tRNAs from decay. Also required for the formation of N(7)-methylguanine at internal sites in a subset of mRNAs. Also required for methylation of a specific subset of miRNAs. The chain is tRNA (guanine-N(7)-)-methyltransferase non-catalytic subunit wdr4 (wdr4) from Danio rerio (Zebrafish).